A 331-amino-acid polypeptide reads, in one-letter code: D-aspartate oxidase 2 (331 aa).

Residues aspartate 35, lysine 36, serine 43, and glycine 307 each coordinate FAD.

This sequence belongs to the DAMOX/DASOX family. FAD serves as cofactor.

Its subcellular location is the cytoplasm. The catalysed reaction is D-aspartate + O2 + H2O = oxaloacetate + H2O2 + NH4(+). It catalyses the reaction D-glutamate + O2 + H2O = H2O2 + 2-oxoglutarate + NH4(+). Functionally, selectively catalyzes the oxidative deamination of acidic amino acids. May play a role in the egg-laying events and early development of the worm, in addition to quality control of the germ cells. This Caenorhabditis briggsae protein is D-aspartate oxidase 2.